We begin with the raw amino-acid sequence, 325 residues long: Hydroxylase/desaturase poxK (325 aa).

Residues 1–12 are compositionally biased toward low complexity; sequence MTATATPVPTVA. The tract at residues 1–25 is disordered; that stretch reads MTATATPVPTVASHAQDITLPPPPK.

This sequence belongs to the asaB hydroxylase/desaturase family.

Its pathway is secondary metabolite biosynthesis. Its function is as follows. Hydroxylase/desaturase; part of the gene cluster that mediates the biosynthesis of oxaleimides, cytotoxic compounds containing an unusual disubstituted succinimide moiety. The first step of the pathway is provided by the HR-PKS poxF that serves in a new mode of collaborative biosynthesis with the PKS-NRPS poxE, by providing the olefin containing amino acid substrate via the synthesis of an ACP-bound dec-4-enoate. The cytochrome P450 monooxygenase poxM-catalyzed oxidation at the alpha-position creates the enzyme-bound 2-hydroxydec-4-enoyl-ACP thioester, which may be prone to spontaneous hydrolysis to yield 2-hydroxydec-4-enoic acid due to increased electrophilicity of the carbonyl. 2-hydroxydec-4-enoic acid can then be further oxidized by poxM to yield the alpha-ketoacid 2-oxodec-4-enoicacid, which is reductively aminated by the aminotransferase poxL to yield (S,E)-2-aminodec-4-enoic acid. The Hybrid PKS-NRPS synthetase poxE then performs condensation between the octaketide product of its PKS modules and the amino group of (S,E)-2-aminodec-4-enoic acid which is activated and incorporated by the adenylation domain. The resulting aminoacyl product can be cyclized by the Diels-Alderase PoxQ and reductively released by the reductive (R) domain of poxE to yield an aldehyde intermediate. The released aldehyde is then substrate for a Knoevenagel condensation by the hydrolyase poxO followed by an oxidation at the 5-position of the pyrrolidone ring. The presence of the olefin from the amino acid building block allows for migration of the substituted allyl group to occur. This allylic transposition reaction takes place in a conjugate addition, semipinacol-like fashion to yield a succinimide intermediate. Iterative two-electron oxidations of the C7 methyl of the succinimide intermediate to the carboxylic acid can be catalyzed by one of two remaining cytochrome P450 monooxygenasess poxC or poxD to yield oxaleimide A. Subsequent oxidation yields the maleimide scaffold oxaleimide I. Both oxaleimide A and oxaleimide I can undergo oxidative modifications in the decalin ring to yield the series of products oxaleimides B to H. This is Hydroxylase/desaturase poxK from Penicillium oxalicum (strain 114-2 / CGMCC 5302) (Penicillium decumbens).